Here is a 675-residue protein sequence, read N- to C-terminus: Protein PALS1 (675 aa).

The interval 1 to 345 (MTTSYMNGHV…QQIKPPPAKE (345 aa)) is required for the correct localization of PALS1 and PATJ at cell-cell contacts and the normal formation of tight junctions and adherens junctions. S14 and S25 each carry phosphoserine. Residues 21–140 (LDLASPEEYP…LKHIQHTLVD (120 aa)) form an interaction with PARD6B region. Residues 51 to 79 (RRSAQLERIRQQQEDMRRRREEEGKKQEL) are disordered. Over residues 54–79 (AQLERIRQQQEDMRRRREEEGKKQEL) the composition is skewed to basic and acidic residues. Residues S83 and S84 each carry the phosphoserine modification. 2 L27 domains span residues 120-177 (NILD…SKAS) and 179-235 (PFPL…MQLE). Residues 181–243 (PLIANVQDLV…LEPITDERVY (63 aa)) are interaction with LIN7C. The PDZ domain maps to 256–336 (IVRIEKARDI…TLTFVLIPSQ (81 aa)). In terms of domain architecture, SH3 spans 345-417 (ETVIHVKAHF…PGKSFQQQRE (73 aa)). The region spanning 479 to 660 (KRPIILIGPQ…AYQELLRLIN (182 aa)) is the Guanylate kinase-like domain. An ATP-binding site is contributed by 486–493 (GPQNCGQN).

It belongs to the MAGUK family. In terms of assembly, heterodimer with MPP1. Forms a heterotrimeric complex composed of PALS1, LIN7B and PATJ; the N-terminal L27 domain of PALS1 interacts with the L27 domain of PATJ and the C-terminal L27 domain of PALS1 interacts with the L27 domain of LIN7B. Component of a complex composed of PALS1, CRB1 and MPP4. Component of a complex whose core is composed of ARHGAP17, AMOT, PALS1, PATJ and PARD3/PAR3. Component of a complex composed of PALS1, CRB1 and EPB41L5. Within the complex, interacts (via HOOK domain) with EPB41L5 (via FERM domain), and interacts with CRB1 (via intracellular domain). Component of a complex composed of PALS1, MPP3 and CRB1; PALS1 acts as a bridging protein between MPP3 (via guanylate kinase-like domain) and CRB1. Component of a complex composed of CRB3, PALS1 and PATJ. As part of the Crumbs complex; interacts with WWP1, the interaction is enhanced by AMOTL2 and facilitates WWP1 localization to the plasma membrane. The Crumbs complex promotes monoubiquitination of AMOTL2 by WWP1, which activates the Hippo signaling pathway. Interacts (via PDZ domain) with PATJ (via N-terminus). Interacts with EZR. Interacts (via PDZ domain) with CRB1 (via C-terminal ERLI motif). While the PDZ domain is sufficient for interaction with CRB1, the adjacent SH3 and guanylate kinase-like domains are likely to contribute to a high affinity interaction. Interacts with WWTR1/TAZ (via WW domain). Interacts with MPP7. Interacts (via PDZ domain) with CRB3 (via C-terminus). Interacts with LIN7C. Interacts with MPDZ. Interacts with PARD6B. Interacts with SC6A1. Interacts with CDH5; the interaction promotes PALS1 localization to cell junctions and is required for CDH5-mediated vascular lumen formation and endothelial cell. Interacts with NPHP1 (via coiled coil and SH3 domains). Interacts with NPHP4. Interacts with CRB2. As to expression, expressed in the retinal pigment epithelium (at protein level). Expressed in the vascular plexus of the retina (at protein level). In the brain, expressed in the dentate gyrus of hippocampus, striatum and cerebellum (at protein level). Expressed in the sciatic nerve (at protein level). Expressed in the kidney nephron (at protein level). Expressed in the lung, and heart. Expressed in placenta, brain, skeletal muscles, pancreas and liver.

The protein resides in the golgi apparatus. The protein localises to the cell membrane. Its subcellular location is the endomembrane system. It localises to the cell junction. It is found in the tight junction. The protein resides in the adherens junction. The protein localises to the cell projection. Its subcellular location is the axon. It localises to the perikaryon. It is found in the apical cell membrane. Its function is as follows. Plays a role in tight junction biogenesis and in the establishment of cell polarity in epithelial cells. Also involved in adherens junction biogenesis by ensuring correct localization of the exocyst complex protein EXOC4/SEC8 which allows trafficking of adherens junction structural component CDH1 to the cell surface. Plays a role through its interaction with CDH5 in vascular lumen formation and endothelial membrane polarity. Required during embryonic and postnatal retinal development. Required for the maintenance of cerebellar progenitor cells in an undifferentiated proliferative state, preventing premature differentiation, and is required for cerebellar histogenesis, fissure formation, cerebellar layer organization and cortical development. Plays a role in neuronal progenitor cell survival, potentially via promotion of mTOR signaling. Plays a role in the radial and longitudinal extension of the myelin sheath in Schwann cells. May modulate SC6A1/GAT1-mediated GABA uptake by stabilizing the transporter. May play a role in the T-cell receptor-mediated activation of NF-kappa-B. Required for localization of EZR to the apical membrane of parietal cells and may play a role in the dynamic remodeling of the apical cytoskeleton. Required for the normal polarized localization of the vesicular marker STX4. Required for the correct trafficking of the myelin proteins PMP22 and MAG. Involved in promoting phosphorylation and cytoplasmic retention of transcriptional coactivators YAP1 and WWTR1/TAZ which leads to suppression of TGFB1-dependent transcription of target genes such as CCN2/CTGF, SERPINE1/PAI1, SNAI1/SNAIL1 and SMAD7. In Mus musculus (Mouse), this protein is Protein PALS1.